The following is a 515-amino-acid chain: Cytosolic Fe-S cluster assembly factor NAR1 homolog (515 aa).

[4Fe-4S] cluster-binding residues include cysteine 19, cysteine 65, cysteine 68, cysteine 71, cysteine 192, cysteine 247, cysteine 428, and cysteine 432.

The protein belongs to the NARF family.

In terms of biological role, component of the cytosolic Fe/S protein assembly machinery. Required for maturation of extramitochondrial Fe/S proteins. May play a role in the transfer of pre-assembled Fe/S clusters to target apoproteins. This chain is Cytosolic Fe-S cluster assembly factor NAR1 homolog, found in Schizosaccharomyces japonicus (strain yFS275 / FY16936) (Fission yeast).